Reading from the N-terminus, the 322-residue chain is UV DNA damage endonuclease (322 aa).

Belongs to the uve1/UvsE family.

In terms of biological role, component in a DNA repair pathway. Removal of UV LIGHT damaged nucleotides. Recognizes pyrimidine dimers and cleave a phosphodiester bond immediately 5' to the lesion. The chain is UV DNA damage endonuclease from Halalkalibacterium halodurans (strain ATCC BAA-125 / DSM 18197 / FERM 7344 / JCM 9153 / C-125) (Bacillus halodurans).